Here is a 115-residue protein sequence, read N- to C-terminus: Large ribosomal subunit protein bL19 (115 aa).

Belongs to the bacterial ribosomal protein bL19 family.

Its function is as follows. This protein is located at the 30S-50S ribosomal subunit interface and may play a role in the structure and function of the aminoacyl-tRNA binding site. This Parabacteroides distasonis (strain ATCC 8503 / DSM 20701 / CIP 104284 / JCM 5825 / NCTC 11152) protein is Large ribosomal subunit protein bL19.